The following is a 249-amino-acid chain: tRNA (guanine-N(1)-)-methyltransferase (249 aa).

S-adenosyl-L-methionine contacts are provided by residues glycine 112 and 132 to 137 (LGDFVL).

The protein belongs to the RNA methyltransferase TrmD family. Homodimer.

It localises to the cytoplasm. The catalysed reaction is guanosine(37) in tRNA + S-adenosyl-L-methionine = N(1)-methylguanosine(37) in tRNA + S-adenosyl-L-homocysteine + H(+). Specifically methylates guanosine-37 in various tRNAs. This chain is tRNA (guanine-N(1)-)-methyltransferase, found in Geobacter sp. (strain M21).